The following is a 163-amino-acid chain: Nucleotide-binding protein YPDSF_2805 (163 aa).

The protein belongs to the YajQ family.

Functionally, nucleotide-binding protein. This Yersinia pestis (strain Pestoides F) protein is Nucleotide-binding protein YPDSF_2805.